The sequence spans 146 residues: Small RNA-binding protein 11, chloroplastic (146 aa).

Residues 1 to 31 (MAALARIGGRHLKSVCLINSSASCFFTQRRG) constitute a chloroplast transit peptide. The region spanning 34–112 (SKLFIGGLSF…RTIFVDYAKA (79 aa)) is the RRM domain. Serine 42 is modified (phosphoserine).

In terms of tissue distribution, expressed in rosette leaves, cauline leaves, stems and flowers.

The protein localises to the plastid. The protein resides in the chloroplast. Probable RNA-binding protein that may be involved in salt and oxidative stress tolerance. The sequence is that of Small RNA-binding protein 11, chloroplastic from Arabidopsis thaliana (Mouse-ear cress).